The sequence spans 291 residues: Capsid protein (291 aa).

Positions 1-14 (MQSRPAQESGSASE) are enriched in polar residues. The tract at residues 1–36 (MQSRPAQESGSASETPARGRPTPSDAPRDEPTNYNN) is disordered.

The protein belongs to the potexviruses coat protein family.

The protein localises to the virion. Functionally, required for genome encapsidation. Forms ribonucleoprotein complexes along with TGB1 helicase and viral RNA. The protein is Capsid protein of Lily symptomless virus (LSV).